An 89-amino-acid polypeptide reads, in one-letter code: Putative membrane protein insertion efficiency factor (89 aa).

It belongs to the UPF0161 family.

It localises to the cell inner membrane. In terms of biological role, could be involved in insertion of integral membrane proteins into the membrane. The protein is Putative membrane protein insertion efficiency factor of Petrotoga mobilis (strain DSM 10674 / SJ95).